The primary structure comprises 197 residues: Probable molybdenum cofactor guanylyltransferase (197 aa).

GTP-binding positions include leucine 6–glycine 8, lysine 18, aspartate 65, and aspartate 97. A Mg(2+)-binding site is contributed by aspartate 97.

Belongs to the MobA family. Mg(2+) is required as a cofactor.

The protein resides in the cytoplasm. It carries out the reaction Mo-molybdopterin + GTP + H(+) = Mo-molybdopterin guanine dinucleotide + diphosphate. Transfers a GMP moiety from GTP to Mo-molybdopterin (Mo-MPT) cofactor (Moco or molybdenum cofactor) to form Mo-molybdopterin guanine dinucleotide (Mo-MGD) cofactor. In Staphylococcus carnosus (strain TM300), this protein is Probable molybdenum cofactor guanylyltransferase.